The sequence spans 459 residues: MMPFSVLQVKRLQLELITPAKPTLQETKFLSDIDDQEGLRFQVPVIMCYKDNPSLNKNCNPVKVIREALSRALVYYYPLAGRLKEGPNRKLMVDCNGEGILFVEASADVTLEQLGDKILPPCPLLEEFLFNFPGSDGIIGCPLLLVQVTCLTCGGFILALRVNHTMCDAPGLLLFLTAIAEMARGAHAPSILPVWERELLFSRDPPRITCVHHEYEDVIDHSDGSYASSNQSNMVQRSFYFGAKEMRVLRKQIPPHVISTCSTFDLITACLSKCRTLALKINPKQAVRVSCVVNARGKHHNVRLPLRYYGNAFAFPTAVSKAEPLCKNPLGYALELVKKAKATMNEEYLRSVADLLVLRGRPQYSSTGSYLIVSDNTRAGFGDVNFGWGQPVFAGPAKALDLISFYVQHKNNTEDGILVPMCLPSSAMERFQQELERITQEPKEDICNNLRSTRIMSMM.

Active-site proton acceptor residues include His-164 and Asn-385.

The protein belongs to the plant acyltransferase family. As to expression, expressed at very low levels in the skin of ripe fruit.

Functionally, involved in the biosynthesis of volatile esters which confer ripe apple fruit flavor. Alcohol acyl transferase that can use a wide range of alcohols as substrate to produce esters. This Malus domestica (Apple) protein is Alcohol acyl transferase 1 allele RGc.